The following is a 715-amino-acid chain: Elongation factor G (715 aa).

A tr-type G domain is found at 8-290; that stretch reads NRYRNIGICA…AVIDFLPAPT (283 aa). GTP contacts are provided by residues 17–24, 88–92, and 142–145; these read AHVDAGKT, DTPGH, and NKMD.

Belongs to the TRAFAC class translation factor GTPase superfamily. Classic translation factor GTPase family. EF-G/EF-2 subfamily.

The protein resides in the cytoplasm. Functionally, catalyzes the GTP-dependent ribosomal translocation step during translation elongation. During this step, the ribosome changes from the pre-translocational (PRE) to the post-translocational (POST) state as the newly formed A-site-bound peptidyl-tRNA and P-site-bound deacylated tRNA move to the P and E sites, respectively. Catalyzes the coordinated movement of the two tRNA molecules, the mRNA and conformational changes in the ribosome. The polypeptide is Elongation factor G (Pseudomonas fluorescens (strain ATCC BAA-477 / NRRL B-23932 / Pf-5)).